Consider the following 570-residue polypeptide: Laccase-3 (570 aa).

The signal sequence occupies residues 1-25 (MESFRRFSLLSFIALLAYFAFLASA). Plastocyanin-like domains are found at residues 33–149 (VITP…PRLG) and 159–310 (RDIP…YVNA). The N-linked (GlcNAc...) asparagine glycan is linked to N79. Cu cation is bound by residues H83, H85, H128, and H130. 6 N-linked (GlcNAc...) asparagine glycosylation sites follow: N188, N298, N332, N383, N393, and N433. Positions 419–554 (DFPPVPPVQF…AMVFLVENGR (136 aa)) constitute a Plastocyanin-like 3 domain. 7 residues coordinate Cu cation: H471, H474, H476, H533, C534, H535, and H539.

Belongs to the multicopper oxidase family. The cofactor is Cu cation. As to expression, mostly expressed in roots and siliques.

The protein resides in the secreted. It is found in the extracellular space. Its subcellular location is the apoplast. The catalysed reaction is 4 hydroquinone + O2 = 4 benzosemiquinone + 2 H2O. Lignin degradation and detoxification of lignin-derived products. This Arabidopsis thaliana (Mouse-ear cress) protein is Laccase-3 (LAC3).